Reading from the N-terminus, the 556-residue chain is MIHWSLIVSALGVCVAVLGGYCGWILFPNMVHKKVEQSVVIQDGSEQFKRFVNLPQPLNFKVYIFNVTNSDRIQQGAIPIVEEIGPYVYKQFRQKKVKHFSRDGSKISYVQNVHFDFDAVASAPYTQDDRIVALNMHMNAFLQVFEREITDIFQGFANRLNSRLNQTPGVRVLKRLMERIRGKRKSVLQISENDPGLALLLVHLNANLKAVFNDPRSMFVSTSVREYLFDGVRFCINPQGIAKAICNQIKESGSKTIREKSDGSLAFSFFGHKNGSGHEVYEVHTGKGDPMRVLEIQKLDDSHNLQVWLNASSEGETSVCNQINGTDASAYPPFRQRGDSMYIFSADICRSVQLFYQTDIQYQGIPGYRYSIGENFINDIGPEHDNECFCVDKLANVIKRKNGCLYAGALDLTTCLDAPVILTLPHMLGASNEYRKMIRGLKPDAKKHQTFVDVQSLTGTPLQGGKRVQFNMFLKSINRIGITENLPTVLMPAIWVEEGIQLNGEMVAFFKKKLINTLKTLNIVHWATLCGGIGVAVACLIYYIYQRGRVVEPPVK.

The Cytoplasmic segment spans residues 1–6; the sequence is MIHWSL. A helical membrane pass occupies residues 7-27; it reads IVSALGVCVAVLGGYCGWILF. The Extracellular segment spans residues 28–522; it reads PNMVHKKVEQ…KLINTLKTLN (495 aa). N-linked (GlcNAc...) asparagine glycans are attached at residues N66, N274, N310, and N324. 2 cysteine pairs are disulfide-bonded: C320-C388 and C349-C415. A helical membrane pass occupies residues 523–543; the sequence is IVHWATLCGGIGVAVACLIYY. Residues 544-556 lie on the Cytoplasmic side of the membrane; the sequence is IYQRGRVVEPPVK.

This sequence belongs to the CD36 family. Detected in the head and to a lesser extent in legs and wings.

The protein resides in the cell membrane. In terms of biological role, plays an olfactory role that is not restricted to pheromone sensitivity. This chain is Sensory neuron membrane protein 2, found in Drosophila melanogaster (Fruit fly).